The following is a 327-amino-acid chain: Biotin synthase (327 aa).

One can recognise a Radical SAM core domain in the interval 49–282 (FNKDKIDLCS…NKVIRLCGGR (234 aa)). [4Fe-4S] cluster-binding residues include Cys67, Cys71, and Cys74. Positions 110, 142, 201, and 277 each coordinate [2Fe-2S] cluster.

This sequence belongs to the radical SAM superfamily. Biotin synthase family. Homodimer. It depends on [4Fe-4S] cluster as a cofactor. [2Fe-2S] cluster is required as a cofactor.

The enzyme catalyses (4R,5S)-dethiobiotin + (sulfur carrier)-SH + 2 reduced [2Fe-2S]-[ferredoxin] + 2 S-adenosyl-L-methionine = (sulfur carrier)-H + biotin + 2 5'-deoxyadenosine + 2 L-methionine + 2 oxidized [2Fe-2S]-[ferredoxin]. It functions in the pathway cofactor biosynthesis; biotin biosynthesis; biotin from 7,8-diaminononanoate: step 2/2. Its function is as follows. Catalyzes the conversion of dethiobiotin (DTB) to biotin by the insertion of a sulfur atom into dethiobiotin via a radical-based mechanism. This Methanococcus maripaludis (strain C5 / ATCC BAA-1333) protein is Biotin synthase.